The sequence spans 574 residues: Thiol:disulfide interchange protein DsbD (574 aa).

The signal sequence occupies residues 1-19 (MAHRILTLILLFCSAHASA). Cysteine 122 and cysteine 128 are oxidised to a cystine. Positions 147-169 (VKANAATPSAATGEQTRVNSDSP) are disordered. The span at 152–169 (ATPSAATGEQTRVNSDSP) shows a compositional bias: polar residues. Helical transmembrane passes span 173-193 (LPFS…TPCV), 218-238 (LLAF…GLVV), 253-273 (WVLV…FGLF), 306-326 (IAGL…LLYI), 333-353 (WLGG…LILV), 367-387 (WMEQ…VFLL), and 399-419 (LWSV…LNAT). The cysteines at positions 192 and 314 are disulfide-linked. The Thioredoxin domain occupies 430 to 574 (LLGAAMICAR…FATHLHNRLR (145 aa)). Cysteine 489 and cysteine 492 are disulfide-bonded.

This sequence belongs to the thioredoxin family. DsbD subfamily.

It localises to the cell inner membrane. The enzyme catalyses [protein]-dithiol + NAD(+) = [protein]-disulfide + NADH + H(+). It carries out the reaction [protein]-dithiol + NADP(+) = [protein]-disulfide + NADPH + H(+). Required to facilitate the formation of correct disulfide bonds in some periplasmic proteins and for the assembly of the periplasmic c-type cytochromes. Acts by transferring electrons from cytoplasmic thioredoxin to the periplasm. This transfer involves a cascade of disulfide bond formation and reduction steps. This is Thiol:disulfide interchange protein DsbD from Cronobacter sakazakii (strain ATCC BAA-894) (Enterobacter sakazakii).